A 151-amino-acid polypeptide reads, in one-letter code: Macrodomain Ter protein (151 aa).

It belongs to the MatP family. As to quaternary structure, homodimer.

Its subcellular location is the cytoplasm. Required for spatial organization of the terminus region of the chromosome (Ter macrodomain) during the cell cycle. Prevents early segregation of duplicated Ter macrodomains during cell division. Binds specifically to matS, which is a 13 bp signature motif repeated within the Ter macrodomain. The polypeptide is Macrodomain Ter protein (Enterobacter sp. (strain 638)).